The following is a 320-amino-acid chain: ATP phosphoribosyltransferase (320 aa).

Belongs to the ATP phosphoribosyltransferase family. Long subfamily. Mg(2+) serves as cofactor.

It is found in the cytoplasm. The enzyme catalyses 1-(5-phospho-beta-D-ribosyl)-ATP + diphosphate = 5-phospho-alpha-D-ribose 1-diphosphate + ATP. It participates in amino-acid biosynthesis; L-histidine biosynthesis; L-histidine from 5-phospho-alpha-D-ribose 1-diphosphate: step 1/9. Feedback inhibited by histidine. Functionally, catalyzes the condensation of ATP and 5-phosphoribose 1-diphosphate to form N'-(5'-phosphoribosyl)-ATP (PR-ATP). Has a crucial role in the pathway because the rate of histidine biosynthesis seems to be controlled primarily by regulation of HisG enzymatic activity. This is ATP phosphoribosyltransferase (hisG) from Caulobacter vibrioides (strain ATCC 19089 / CIP 103742 / CB 15) (Caulobacter crescentus).